Reading from the N-terminus, the 482-residue chain is Adenylyltransferase and sulfurtransferase uba4 (482 aa).

A disordered region spans residues 33-57 (EGAALRAQSQKTASANATTGQRTKS). Positions 39 to 54 (AQSQKTASANATTGQR) are enriched in polar residues. ATP contacts are provided by residues Gly98, Asp119, 126 to 130 (SNLHR), Lys143, and 187 to 188 (DN). 2 residues coordinate Zn(2+): Cys236 and Cys239. Cys253 serves as the catalytic Glycyl thioester intermediate; for adenylyltransferase activity. 2 residues coordinate Zn(2+): Cys315 and Cys318. The 115-residue stretch at 366–480 (AGAQRHIIDV…WREQVDPDWP (115 aa)) folds into the Rhodanese domain. The active-site Cysteine persulfide intermediate; for sulfurtransferase activity is the Cys435.

In the N-terminal section; belongs to the HesA/MoeB/ThiF family. UBA4 subfamily. Zn(2+) is required as a cofactor.

It is found in the cytoplasm. Its subcellular location is the cytosol. It catalyses the reaction [molybdopterin-synthase sulfur-carrier protein]-C-terminal Gly-Gly + ATP + H(+) = [molybdopterin-synthase sulfur-carrier protein]-C-terminal Gly-Gly-AMP + diphosphate. It carries out the reaction [molybdopterin-synthase sulfur-carrier protein]-C-terminal Gly-Gly-AMP + S-sulfanyl-L-cysteinyl-[cysteine desulfurase] + AH2 = [molybdopterin-synthase sulfur-carrier protein]-C-terminal-Gly-aminoethanethioate + L-cysteinyl-[cysteine desulfurase] + A + AMP + 2 H(+). It functions in the pathway tRNA modification; 5-methoxycarbonylmethyl-2-thiouridine-tRNA biosynthesis. It participates in cofactor biosynthesis; molybdopterin biosynthesis. Functionally, plays a central role in 2-thiolation of mcm(5)S(2)U at tRNA wobble positions of cytosolic tRNA(Lys), tRNA(Glu) and tRNA(Gln). Also essential during biosynthesis of the molybdenum cofactor. Acts by mediating the C-terminal thiocarboxylation of sulfur carriers urm1 and mocs2a. Its N-terminus first activates urm1 and mocs2a as acyl-adenylates (-COAMP), then the persulfide sulfur on the catalytic cysteine is transferred to urm1 and mocs2a to form thiocarboxylation (-COSH) of their C-terminus. The reaction probably involves hydrogen sulfide that is generated from the persulfide intermediate and that acts as a nucleophile towards urm1 and mocs2a. Subsequently, a transient disulfide bond is formed. Does not use thiosulfate as sulfur donor; nfs1 probably acting as a sulfur donor for thiocarboxylation reactions. This Emericella nidulans (strain FGSC A4 / ATCC 38163 / CBS 112.46 / NRRL 194 / M139) (Aspergillus nidulans) protein is Adenylyltransferase and sulfurtransferase uba4.